A 506-amino-acid chain; its full sequence is Kynurenine 3-monooxygenase (506 aa).

The tract at residues 153–174 (QETSLLPGEESEKDKKQNTEDE) is disordered. The span at 162–171 (ESEKDKKQNT) shows a compositional bias: basic and acidic residues.

The protein belongs to the aromatic-ring hydroxylase family. KMO subfamily. Requires FAD as cofactor.

It localises to the mitochondrion outer membrane. It catalyses the reaction L-kynurenine + NADPH + O2 + H(+) = 3-hydroxy-L-kynurenine + NADP(+) + H2O. It functions in the pathway cofactor biosynthesis; NAD(+) biosynthesis; quinolinate from L-kynurenine: step 1/3. In terms of biological role, catalyzes the hydroxylation of L-kynurenine (L-Kyn) to form 3-hydroxy-L-kynurenine (L-3OHKyn). Required for synthesis of quinolinic acid. This is Kynurenine 3-monooxygenase from Cryptococcus neoformans var. neoformans serotype D (strain JEC21 / ATCC MYA-565) (Filobasidiella neoformans).